A 341-amino-acid polypeptide reads, in one-letter code: N-acetyl-gamma-glutamyl-phosphate reductase (341 aa).

Residue cysteine 148 is part of the active site.

Belongs to the NAGSA dehydrogenase family. Type 1 subfamily.

The protein localises to the cytoplasm. The enzyme catalyses N-acetyl-L-glutamate 5-semialdehyde + phosphate + NADP(+) = N-acetyl-L-glutamyl 5-phosphate + NADPH + H(+). It functions in the pathway amino-acid biosynthesis; L-arginine biosynthesis; N(2)-acetyl-L-ornithine from L-glutamate: step 3/4. In terms of biological role, catalyzes the NADPH-dependent reduction of N-acetyl-5-glutamyl phosphate to yield N-acetyl-L-glutamate 5-semialdehyde. This Pseudothermotoga lettingae (strain ATCC BAA-301 / DSM 14385 / NBRC 107922 / TMO) (Thermotoga lettingae) protein is N-acetyl-gamma-glutamyl-phosphate reductase.